A 300-amino-acid chain; its full sequence is Bifunctional protein FolD (300 aa).

Residues 169 to 171 (GHS) and Ile235 contribute to the NADP(+) site.

The protein belongs to the tetrahydrofolate dehydrogenase/cyclohydrolase family. As to quaternary structure, homodimer.

The enzyme catalyses (6R)-5,10-methylene-5,6,7,8-tetrahydrofolate + NADP(+) = (6R)-5,10-methenyltetrahydrofolate + NADPH. The catalysed reaction is (6R)-5,10-methenyltetrahydrofolate + H2O = (6R)-10-formyltetrahydrofolate + H(+). It functions in the pathway one-carbon metabolism; tetrahydrofolate interconversion. In terms of biological role, catalyzes the oxidation of 5,10-methylenetetrahydrofolate to 5,10-methenyltetrahydrofolate and then the hydrolysis of 5,10-methenyltetrahydrofolate to 10-formyltetrahydrofolate. The polypeptide is Bifunctional protein FolD (Rhodobacter capsulatus (strain ATCC BAA-309 / NBRC 16581 / SB1003)).